We begin with the raw amino-acid sequence, 288 residues long: uncharacterized protein (288 aa).

The protein to M.bovis Mb1522c, M.leprae ML1804 and M.avium MAV321.

This is an uncharacterized protein from Mycobacterium tuberculosis (strain ATCC 25618 / H37Rv).